Reading from the N-terminus, the 151-residue chain is uncharacterized protein (151 aa).

4 helical membrane-spanning segments follow: residues 8-28 (GIGSGVSLLILRFFLAWEFFE), 60-80 (WHVAMGSELIFPFLLIFGVLT), 82-102 (FSALSLTILISVAWYSIHADS), and 113-133 (LPLIYVVTLLILITQGAGKLS).

This sequence belongs to the DoxX family.

It is found in the cell membrane. This is an uncharacterized protein from Haemophilus influenzae (strain ATCC 51907 / DSM 11121 / KW20 / Rd).